Consider the following 101-residue polypeptide: NAD(P)H-quinone oxidoreductase subunit 4L, chloroplastic (101 aa).

A run of 3 helical transmembrane segments spans residues 2–22, 32–52, and 61–81; these read MLEH…YGLI, MCLE…SDFF, and IFSI…PAIV.

Belongs to the complex I subunit 4L family. As to quaternary structure, NDH is composed of at least 16 different subunits, 5 of which are encoded in the nucleus.

It localises to the plastid. The protein localises to the chloroplast thylakoid membrane. The catalysed reaction is a plastoquinone + NADH + (n+1) H(+)(in) = a plastoquinol + NAD(+) + n H(+)(out). The enzyme catalyses a plastoquinone + NADPH + (n+1) H(+)(in) = a plastoquinol + NADP(+) + n H(+)(out). In terms of biological role, NDH shuttles electrons from NAD(P)H:plastoquinone, via FMN and iron-sulfur (Fe-S) centers, to quinones in the photosynthetic chain and possibly in a chloroplast respiratory chain. The immediate electron acceptor for the enzyme in this species is believed to be plastoquinone. Couples the redox reaction to proton translocation, and thus conserves the redox energy in a proton gradient. The sequence is that of NAD(P)H-quinone oxidoreductase subunit 4L, chloroplastic from Morus indica (Mulberry).